We begin with the raw amino-acid sequence, 197 residues long: Putative protein N5-glutamine methyltransferase MJ0928 (197 aa).

Residues glycine 42 to glycine 46, aspartate 64, and asparagine 105 each bind S-adenosyl-L-methionine. Asparagine 105–tyrosine 108 contributes to the substrate binding site.

Belongs to the eukaryotic/archaeal PrmC-related family.

The catalysed reaction is L-glutaminyl-[protein] + S-adenosyl-L-methionine = N(5)-methyl-L-glutaminyl-[protein] + S-adenosyl-L-homocysteine + H(+). In terms of biological role, putative protein methyltransferase using S-adenosyl-L-methionine as the methyl donor. May methylate a Gln residue in target proteins. The protein is Putative protein N5-glutamine methyltransferase MJ0928 of Methanocaldococcus jannaschii (strain ATCC 43067 / DSM 2661 / JAL-1 / JCM 10045 / NBRC 100440) (Methanococcus jannaschii).